Consider the following 406-residue polypeptide: Phosphopentomutase (406 aa).

Mn(2+)-binding residues include D10, D305, H310, D346, H347, and H358.

This sequence belongs to the phosphopentomutase family. Mn(2+) is required as a cofactor.

Its subcellular location is the cytoplasm. It catalyses the reaction 2-deoxy-alpha-D-ribose 1-phosphate = 2-deoxy-D-ribose 5-phosphate. The enzyme catalyses alpha-D-ribose 1-phosphate = D-ribose 5-phosphate. The protein operates within carbohydrate degradation; 2-deoxy-D-ribose 1-phosphate degradation; D-glyceraldehyde 3-phosphate and acetaldehyde from 2-deoxy-alpha-D-ribose 1-phosphate: step 1/2. Isomerase that catalyzes the conversion of deoxy-ribose 1-phosphate (dRib-1-P) and ribose 1-phosphate (Rib-1-P) to deoxy-ribose 5-phosphate (dRib-5-P) and ribose 5-phosphate (Rib-5-P), respectively. The sequence is that of Phosphopentomutase from Vibrio parahaemolyticus serotype O3:K6 (strain RIMD 2210633).